The sequence spans 879 residues: Leucine--tRNA ligase (879 aa).

The short motif at 43 to 53 (PYPSGRIHMGH) is the 'HIGH' region element. A 'KMSKS' region motif is present at residues 636 to 640 (KMSKS). Lys639 provides a ligand contact to ATP.

The protein belongs to the class-I aminoacyl-tRNA synthetase family.

Its subcellular location is the cytoplasm. The enzyme catalyses tRNA(Leu) + L-leucine + ATP = L-leucyl-tRNA(Leu) + AMP + diphosphate. The sequence is that of Leucine--tRNA ligase from Afipia carboxidovorans (strain ATCC 49405 / DSM 1227 / KCTC 32145 / OM5) (Oligotropha carboxidovorans).